Consider the following 676-residue polypeptide: Pre-mRNA-splicing factor CLF1 (676 aa).

16 HAT repeats span residues 46 to 78 (EYQGRKRQEYEGALRRNRLNTGQWMRYAQWELE), 80 to 112 (REFARARSVFERALEVNSTHVPTWIRYIQCELK), 114 to 146 (KNINHARNLLDRAVTLLPRVDKLWFTYVATEET), 148 to 179 (GNIAGCRAVFERWMHWRPPVTAWAAYVNMEKR), 181 to 212 (REFDRARGILRRYVTVHPGAPAWNKWAKFEME), 215 to 255 (NRDT…FETR), 257 to 291 (REYERARALYTYGLEKLPKSKSAKLYADYTAFEKQ), 301 to 333 (VVLTKRRSKYEDQLKEDPADYDTWFSYITLGQE), 336 to 369 (LEADQIREIFERAVSNVPPHSKRLWRRYIFLWIK), 379 to 415 (KEVEKAREIYKTCISIIPHKKFTFAKVWLLWAKFEIR), 417 to 449 (GNLPEARKILGRGLGMSGGKPALYKGYIALEAK), 451 to 483 (REFDRCRKLYDKYVEKFAEFAAPWMEYAELEQM), 485 to 519 (GDEERARAIFELAVSQPEMEMPELVWKRFIEFEAE), 521 to 553 (ENYDRARAIYRQLLDRTHGHIKVWISFAQFEVT), 576 to 614 (EAKARARSIFGEAWDALKAANKREERVVLFESWREFEEE), and 620 to 652 (SKADLDKRKPTPVKKKRKLEDGTFEEYIDYVFP). Residues 616–628 (GDDKSKADLDKRK) are compositionally biased toward basic and acidic residues. The tract at residues 616 to 636 (GDDKSKADLDKRKPTPVKKKR) is disordered.

It belongs to the crooked-neck family. In terms of assembly, associated with the spliceosome.

It localises to the nucleus. Functionally, involved in pre-mRNA splicing and cell cycle progression. Required for the spliceosome assembly and initiation of the DNA replication. The chain is Pre-mRNA-splicing factor CLF1 (CLF1) from Yarrowia lipolytica (strain CLIB 122 / E 150) (Yeast).